The following is a 43-amino-acid chain: Protein PsbN (43 aa).

Residues 5-27 (TLVAISISGSLVSFTGYALYTAF) form a helical membrane-spanning segment.

It belongs to the PsbN family.

It localises to the plastid. Its subcellular location is the chloroplast thylakoid membrane. In terms of biological role, may play a role in photosystem I and II biogenesis. The protein is Protein PsbN of Drimys granadensis.